The primary structure comprises 362 residues: Lactosylceramide alpha-2,3-sialyltransferase (362 aa).

Residues 1–5 lie on the Cytoplasmic side of the membrane; it reads MRRPS. The chain crosses the membrane as a helical; Signal-anchor for type II membrane protein span at residues 6–26; sequence LLLKDILKCTLLVFGVWILYI. Residues 27 to 362 lie on the Lumenal side of the membrane; it reads LKLNYTTEEC…DLSGGIDREF (336 aa). 4 N-linked (GlcNAc...) asparagine glycosylation sites follow: asparagine 30, asparagine 180, asparagine 224, and asparagine 334. A disulfide bridge connects residues cysteine 139 and cysteine 297.

Belongs to the glycosyltransferase 29 family.

The protein localises to the golgi apparatus membrane. The catalysed reaction is a beta-D-Gal-(1-&gt;4)-beta-D-Glc-(1&lt;-&gt;1)-Cer(d18:1(4E)) + CMP-N-acetyl-beta-neuraminate = a ganglioside GM3 (d18:1(4E)) + CMP + H(+). It carries out the reaction ganglioside GA2 (d18:1(4E)/18:0) + CMP-N-acetyl-beta-neuraminate = ganglioside GM2 (d18:1(4E)/18:0) + CMP + H(+). The enzyme catalyses a beta-D-Gal-(1&lt;-&gt;1')-ceramide + CMP-N-acetyl-beta-neuraminate = N-acetyl-alpha-neuraminosyl-(2-&gt;3)-beta-D-galactosyl-(1&lt;-&gt;1')-ceramide + CMP + H(+). It catalyses the reaction ganglioside GA1 (d18:1(4E)/18:0) + CMP-N-acetyl-beta-neuraminate = ganglioside GM1 (d18:1(4E)/18:0) + CMP + H(+). Transfers the sialyl group (N-acetyl-alpha-neuraminyl or NeuAc) from CMP-NeuAc to the non-reducing terminal galactose (Gal) of glycosphingolipids forming gangliosides (important molecules involved in the regulation of multiple cellular processes, including cell proliferation and differentiation, apoptosis, embryogenesis, development, and oncogenesis). Mainly involved in the biosynthesis of ganglioside GM3 but can also use different glycolipids as substrate acceptors such as D-galactosylceramide (GalCer), asialo-GM2 (GA2) and asialo-GM1 (GA1), although less preferentially than beta-D-Gal-(1-&gt;4)-beta-D-Glc-(1&lt;-&gt;1)-Cer (LacCer). The protein is Lactosylceramide alpha-2,3-sialyltransferase (ST3GAL5) of Pan troglodytes (Chimpanzee).